A 309-amino-acid polypeptide reads, in one-letter code: Formate-nitrite transporter (309 aa).

Topologically, residues 1 to 19 (MPPNNSKYVLDPVSIKSVC) are cytoplasmic. Positions 20–35 (GGEESYIRCVEYGKKK) form an intramembrane region, helical. The Cytoplasmic segment spans residues 36–40 (AHYSN). A helical transmembrane segment spans residues 41–68 (LNLLAKAILAGMFVGLCAHASGIAGGLF). Residues 69–79 (YYHKLREIVGA) are Extracellular-facing. Residues 80-100 (SMSVFVYGFTFPIAFMCIICT) traverse the membrane as a helical segment. Topologically, residues 101–122 (GSDLFTGNTLAVTMALYEKKVK) are cytoplasmic. The helical transmembrane segment at 123–150 (LLDYLRVMTISLFGNYVGAVSFAFFVSY) threads the bilayer. At 151-163 (LSGAFTNVHAVEK) the chain is on the extracellular side. The helical intramembrane region spans 164 to 179 (NHFFQFLNDIAEKKVH). Topologically, residues 180–181 (HT) are extracellular. A helical membrane pass occupies residues 182 to 206 (FVECVSLAVGCNIFVCLAVYFVLTL). Over 207–209 (KDG) the chain is Cytoplasmic. A helical transmembrane segment spans residues 210 to 226 (AGYVFSVFFAVYAFAIA). At 227 to 249 (GYEHIIANIYTLNIALMVNTKIT) the chain is on the extracellular side. A helical transmembrane segment spans residues 250–280 (VYQAYIKNLLPTLLGNYIAGAIVLGLPLYFI). Residues 281–309 (YKEHYYNFERSKRDNNDAQMKSLSIELRN) are Cytoplasmic-facing.

Belongs to the FNT transporter (TC 1.A.16) family. As to quaternary structure, homopentamer.

Its subcellular location is the cell membrane. The protein localises to the vacuole membrane. The catalysed reaction is (S)-lactate(in) + H(+)(in) = (S)-lactate(out) + H(+)(out). It catalyses the reaction formate(in) + H(+)(in) = formate(out) + H(+)(out). The enzyme catalyses pyruvate(out) + H(+)(out) = pyruvate(in) + H(+)(in). It carries out the reaction acetate(out) + H(+)(out) = acetate(in) + H(+)(in). Its activity is regulated as follows. Inhibited by diethylpyrocarbonate (DEPC). Protonophores, such as 2,4-dinitrophenol and carbonylcyanide-3-chlorophenylhydrazone, abolish transport. Inhibited by phloretin, furosemide, alpha-cyano-4-hydroxy-cinnamate and alpha-fluorocinnamate. Inhibited by the Malaria Box compound MMV007839 and its derivatives BH296 and BH267.meta. Inhibited by the Malaria Box compound MMV000972. Inhibited by broad-specificity anion transport inhibitor NPPB. Functionally, monocarboxylate-proton symporter that mediates the efflux of the waste product lactate in the intraerythrocytic parasites; active in acidic-to-neutral pH range. Transports L-lactate. Transports D-lactate, pyruvate, acetate and formate. Essential for asexual growth but dispensable for the development of gametocytes. In Plasmodium falciparum (isolate 3D7), this protein is Formate-nitrite transporter.